Here is a 484-residue protein sequence, read N- to C-terminus: Magnesium transporter MRS2-3 (484 aa).

2 disordered regions span residues 1 to 40 (MRGARPDEFNFSTNPSTPNTGQPTPTYPAGVGGGGGGRKK) and 141 to 186 (TKPQ…QSLE). The segment covering 10–24 (NFSTNPSTPNTGQPT) has biased composition (polar residues). Positions 203–275 (ACLEAASSSL…LLDDDEDMAE (73 aa)) form a coiled coil. The tract at residues 286 to 320 (LEDSSNSSMNESDTFEVDLPQGDEDDRLPPEFASE) is disordered. Residues 298–311 (DTFEVDLPQGDEDD) are compositionally biased toward acidic residues. Residues 416 to 436 (GVMLTTATLVMSAFIAVAGVF) traverse the membrane as a helical segment. A Required for magnesium transport activity motif is present at residues 437 to 439 (GMN). A helical transmembrane segment spans residues 455 to 475 (FIWTVIGGSIGSICLYVGAIG).

It belongs to the CorA metal ion transporter (MIT) (TC 1.A.35.5) family. Expressed in the whole plant.

Its subcellular location is the membrane. Functionally, magnesium transporter that may mediate the influx of magnesium. The chain is Magnesium transporter MRS2-3 (MRS2-3) from Arabidopsis thaliana (Mouse-ear cress).